The sequence spans 460 residues: UDP-N-acetylmuramate--L-alanine ligase (460 aa).

G116–T122 contributes to the ATP binding site.

It belongs to the MurCDEF family.

The protein resides in the cytoplasm. It catalyses the reaction UDP-N-acetyl-alpha-D-muramate + L-alanine + ATP = UDP-N-acetyl-alpha-D-muramoyl-L-alanine + ADP + phosphate + H(+). Its pathway is cell wall biogenesis; peptidoglycan biosynthesis. In terms of biological role, cell wall formation. In Caldanaerobacter subterraneus subsp. tengcongensis (strain DSM 15242 / JCM 11007 / NBRC 100824 / MB4) (Thermoanaerobacter tengcongensis), this protein is UDP-N-acetylmuramate--L-alanine ligase.